A 1033-amino-acid polypeptide reads, in one-letter code: SIT4-associating protein SAP190 (1033 aa).

Disordered stretches follow at residues 32-82, 147-213, 768-813, and 828-1033; these read DQDD…TTES, PEII…QVET, FGND…HDSG, and ENEE…KEAF. The segment covering 158–170 has biased composition (basic and acidic residues); it reads ILIERDRKDKKED. Residues 171 to 182 show a composition bias toward acidic residues; the sequence is AEEGGDSEETTN. A compositionally biased stretch (basic and acidic residues) spans 183 to 195; it reads DSDHDSGDERSVD. At S774 the chain carries Phosphoserine. Acidic residues-rich tracts occupy residues 784–793 and 828–838; these read SEDIIGDTEG and ENEEDYAEYSD. A phosphoserine mark is found at S857, S862, and S892. Residues 858 to 879 are compositionally biased toward basic and acidic residues; sequence DDGKSKSAESEFTDKISEHRDG. The segment covering 909-924 has biased composition (polar residues); the sequence is SRSQPSDPKLQDQNIF. Acidic residues predominate over residues 932–944; that stretch reads GVGDDDDYMDPND. A Phosphothreonine modification is found at T990. At S991 the chain carries Phosphoserine. Positions 1000 to 1018 are enriched in acidic residues; that stretch reads ISSDEEDSEDEDEENDMGN.

Belongs to the SAPS family. Associates with the SIT4 protein phosphatase catalytic subunit in a cell-cycle-dependent manner. Hyperphosphorylated in the absence of SIT4.

The protein resides in the cytoplasm. Functionally, positive regulator of protein phosphatase SIT4. Involved in the general amino acid control (GAAC) response regulated by TOR. Involved in the dephosphorylation of the elongator complex subunit IKI3. In Saccharomyces cerevisiae (strain AWRI1631) (Baker's yeast), this protein is SIT4-associating protein SAP190 (SAP190).